The chain runs to 311 residues: tRNA-cytidine(32) 2-sulfurtransferase (311 aa).

The PP-loop motif signature appears at 47–52; that stretch reads SGGKDS. [4Fe-4S] cluster-binding residues include cysteine 122, cysteine 125, and cysteine 213.

Belongs to the TtcA family. Homodimer. It depends on Mg(2+) as a cofactor. Requires [4Fe-4S] cluster as cofactor.

The protein resides in the cytoplasm. It catalyses the reaction cytidine(32) in tRNA + S-sulfanyl-L-cysteinyl-[cysteine desulfurase] + AH2 + ATP = 2-thiocytidine(32) in tRNA + L-cysteinyl-[cysteine desulfurase] + A + AMP + diphosphate + H(+). It functions in the pathway tRNA modification. Catalyzes the ATP-dependent 2-thiolation of cytidine in position 32 of tRNA, to form 2-thiocytidine (s(2)C32). The sulfur atoms are provided by the cysteine/cysteine desulfurase (IscS) system. The polypeptide is tRNA-cytidine(32) 2-sulfurtransferase (Salmonella dublin (strain CT_02021853)).